The primary structure comprises 347 residues: Heat-inducible transcription repressor HrcA (347 aa).

The protein belongs to the HrcA family.

Negative regulator of class I heat shock genes (grpE-dnaK-dnaJ and groELS operons). Prevents heat-shock induction of these operons. The polypeptide is Heat-inducible transcription repressor HrcA (Lactococcus lactis subsp. lactis (strain IL1403) (Streptococcus lactis)).